The sequence spans 341 residues: HTH-type transcriptional repressor PurR (341 aa).

One can recognise an HTH lacI-type domain in the interval 2–56 (ATIKDVAKRANVSTTTVSHVINKTRFVAEETRNAVWAAIKELHYSPSAVARSLKV). A DNA-binding region (H-T-H motif) is located at residues 4 to 23 (IKDVAKRANVSTTTVSHVIN). Residues 48–56 (SAVARSLKV) mediate DNA binding. Hypoxanthine is bound by residues tyrosine 73, arginine 190, threonine 192, phenylalanine 221, and aspartate 275.

In terms of assembly, homodimer.

The protein operates within purine metabolism; purine nucleotide biosynthesis [regulation]. Functionally, is the main repressor of the genes involved in the de novo synthesis of purine nucleotides, regulating purB, purC, purEK, purF, purHD, purL, purMN and guaBA expression. PurR is allosterically activated to bind its cognate DNA by binding the purine corepressors, hypoxanthine or guanine, thereby effecting transcription repression. The protein is HTH-type transcriptional repressor PurR of Shigella sonnei (strain Ss046).